Reading from the N-terminus, the 287-residue chain is Probable F-box protein At5g04010 (287 aa).

The 52-residue stretch at 50–101 (PSPPSWEILCLVGPYMDPESLAVASCVSTTWSKCFSSEDLWKSLPATRHSIF) folds into the F-box; degenerate domain.

This Arabidopsis thaliana (Mouse-ear cress) protein is Probable F-box protein At5g04010 (NSFBx).